The sequence spans 421 residues: MTADLLLTHFNQVFCPKDLGHPLFGEEMKEAQVLEDGYIAVKDGKILAVGSGEPDASLVGPDTKIQSYEGKIATPGLIDCHTHLVYGGSREHEFAKKLAGVPYLEILAQGGGILSTVRATREASFDTLYDKSRRLLDYMLLHGVTTVEAKSGYGLDWETEKRQLDVVGALDRDHEIDLVSTFMAAHAVPPEYKGRSQEYLELIVEEMLPRVKAENLAEFCDIFCEKGVFTADESRYLLSKAKEMGFKLRIHADEIESIGGVDVAAELGATSAEHLMVATDEGIRKMAEAKVIGNLLPATTFSLMEDTYAPARKMLEAGMAITLTTDSNPGSCPTANLQFVMQLGCFMMRLTPVEVLNAVTINAAYSVNRQDKIGSFDTGKQADITILDAKNIDYPLYFFATNLTHQVYKAGKLVVDQGRIV.

Fe(3+) contacts are provided by histidine 81 and histidine 83. Positions 81 and 83 each coordinate Zn(2+). Arginine 90, tyrosine 153, and histidine 186 together coordinate 4-imidazolone-5-propanoate. N-formimidoyl-L-glutamate is bound at residue tyrosine 153. Histidine 251 is a Fe(3+) binding site. Histidine 251 serves as a coordination point for Zn(2+). Glutamate 254 is a 4-imidazolone-5-propanoate binding site. Aspartate 326 contributes to the Fe(3+) binding site. Aspartate 326 is a binding site for Zn(2+). Asparagine 328 and glycine 330 together coordinate N-formimidoyl-L-glutamate. A 4-imidazolone-5-propanoate-binding site is contributed by serine 331.

This sequence belongs to the metallo-dependent hydrolases superfamily. HutI family. Requires Zn(2+) as cofactor. Fe(3+) is required as a cofactor.

The protein resides in the cytoplasm. It catalyses the reaction 4-imidazolone-5-propanoate + H2O = N-formimidoyl-L-glutamate. It functions in the pathway amino-acid degradation; L-histidine degradation into L-glutamate; N-formimidoyl-L-glutamate from L-histidine: step 3/3. Functionally, catalyzes the hydrolytic cleavage of the carbon-nitrogen bond in imidazolone-5-propanoate to yield N-formimidoyl-L-glutamate. It is the third step in the universal histidine degradation pathway. In Streptococcus sanguinis (strain SK36), this protein is Imidazolonepropionase.